A 56-amino-acid chain; its full sequence is uncharacterized protein (56 aa).

This is an uncharacterized protein from Dictyostelium discoideum (Social amoeba).